A 329-amino-acid chain; its full sequence is RNA polymerase sigma factor SigB (329 aa).

Polar residues predominate over residues 1–12 (MTSPSDVEASTE). Positions 1-27 (MTSPSDVEASTETVDRGSRRNQTNDNP) are disordered. The Polymerase core binding signature appears at 120 to 133 (DLIQEGNLGLIRAM). Residues 290–309 (LDQIGRQFGLSRERVRQIER) constitute a DNA-binding region (H-T-H motif).

The protein belongs to the sigma-70 factor family.

In terms of biological role, sigma factors are initiation factors that promote the attachment of RNA polymerase to specific initiation sites and are then released. This is RNA polymerase sigma factor SigB (sigB) from Corynebacterium diphtheriae (strain ATCC 700971 / NCTC 13129 / Biotype gravis).